A 78-amino-acid polypeptide reads, in one-letter code: COP9 signalosome complex subunit 5b (78 aa).

The protein belongs to the peptidase M67A family. CSN5 subfamily. In terms of assembly, component of the CSN complex, probably composed of CSN1, CSN2, CSN3, CSN4, CSN5 (CSN5A or CSN5B), CSN6 (CSN6A or CSN6B), CSN7 and CSN8. The cofactor is a divalent metal cation.

Its subcellular location is the cytoplasm. The protein resides in the nucleus. Functionally, probable protease subunit of the COP9 signalosome complex (CSN), a complex involved in various cellular and developmental processes such as photomorphogenesis and auxin and jasmonate responses. The CSN complex is an essential regulator of the ubiquitin (Ubl) conjugation pathway by mediating the deneddylation of the cullin subunits of the SCF-type E3 ligase complexes, leading to decrease the Ubl ligase activity of SCF. In the complex, it probably acts as the catalytic center that mediates the cleavage of Nedd8 from cullins. It however has no metalloprotease activity by itself and requires the other subunits of the CSN complex. The CSN complex is involved in repression of photomorphogenesis in darkness by regulating the activity of COP1-containing Ubl ligase complexes. The polypeptide is COP9 signalosome complex subunit 5b (CSN5B) (Brassica oleracea (Wild cabbage)).